A 526-amino-acid chain; its full sequence is Protein spinster homolog 1 (526 aa).

The interval 1–44 (MTSRRSHGDVTPFLTQADNTEEEGVRDPESQSSDEEEEEGKDHG) is disordered. 12 helical membrane passes run 59–79 (VIIV…RFTV), 98–118 (GLVQ…FGYL), 126–146 (LIMC…SFVS), 159–179 (LVGV…ADLF), 187–207 (MLSF…IVGS), 218–238 (WALR…IFVA), 272–292 (FILS…LALW), 321–341 (MIFG…GVEI), 355–375 (LVCA…LAFA), 384–404 (VFIF…ADIL), 419–439 (LQIV…IGVI), and 463–483 (MICA…ALFI).

This sequence belongs to the major facilitator superfamily. Spinster (TC 2.A.1.49) family.

Its subcellular location is the lysosome membrane. The enzyme catalyses a 1-acyl-sn-glycero-3-phosphocholine(out) + H(+)(out) = a 1-acyl-sn-glycero-3-phosphocholine(in) + H(+)(in). It catalyses the reaction a 1-acyl-sn-glycero-3-phosphoethanolamine(out) + H(+)(out) = a 1-acyl-sn-glycero-3-phosphoethanolamine(in) + H(+)(in). The catalysed reaction is a 1-O-(1Z-alkenyl)-sn-glycero-3-phosphocholine(out) + H(+)(out) = a 1-O-(1Z-alkenyl)-sn-glycero-3-phosphocholine(in) + H(+)(in). It carries out the reaction a 1-O-(1Z-alkenyl)-sn-glycero-3-phosphoethanolamine(out) + H(+)(out) = a 1-O-(1Z-alkenyl)-sn-glycero-3-phosphoethanolamine(in) + H(+)(in). Mediates the rate-limiting, proton-dependent, lysosomal efflux of lysophospholipids. Selective for zwitterionic headgroups such as lysophosphatidylcholine (LPC) and lysophosphatidylethanolamine (LPE). Essential player in lysosomal homeostasis. The chain is Protein spinster homolog 1 (spns1) from Xenopus laevis (African clawed frog).